A 229-amino-acid polypeptide reads, in one-letter code: B-cell antigen receptor complex-associated protein beta chain (229 aa).

Positions 1-28 are cleaved as a signal peptide; it reads MARLALSPVPSHWMVALLLLLSAEPVPA. Residues 29 to 159 lie on the Extracellular side of the membrane; it reads ARSEDRYRNP…QLKQRNTLKD (131 aa). The 101-residue stretch at 38-138 folds into the Ig-like V-type domain; it reads PKGSACSRIW…TSEVYQGCGT (101 aa). 2 disulfide bridges follow: C43–C126 and C65–C122. N73, N101, N127, and N128 each carry an N-linked (GlcNAc...) asparagine glycan. The chain crosses the membrane as a helical span at residues 160-180; that stretch reads GIIMIQTLLIILFIIVPIFLL. The Cytoplasmic portion of the chain corresponds to 181–229; that stretch reads LDKDDSKAGMEEDHTYEGLDIDQTATYEDIVTLRTGEVKWSVGEHPGQE. Positions 185 to 213 constitute an ITAM domain; it reads DSKAGMEEDHTYEGLDIDQTATYEDIVTL. Phosphotyrosine; by SRC-type Tyr-kinases is present on residues Y196 and Y207.

As to quaternary structure, heterodimer of alpha and beta chains; disulfide-linked. Part of the B-cell antigen receptor complex where the alpha/beta chain heterodimer is non-covalently associated with an antigen-specific membrane-bound surface immunoglobulin of two heavy chains and two light chains. Interacts with LYN. Post-translationally, phosphorylated on tyrosine upon B-cell activation by SRC-type Tyr-kinases such as BLK, LYN and SYK. B-cells.

The protein resides in the cell membrane. Required in cooperation with CD79A for initiation of the signal transduction cascade activated by the B-cell antigen receptor complex (BCR) which leads to internalization of the complex, trafficking to late endosomes and antigen presentation. Enhances phosphorylation of CD79A, possibly by recruiting kinases which phosphorylate CD79A or by recruiting proteins which bind to CD79A and protect it from dephosphorylation. This Homo sapiens (Human) protein is B-cell antigen receptor complex-associated protein beta chain (CD79B).